The following is a 703-amino-acid chain: Calpain-8 (703 aa).

Positions 45–344 (LFKDPEFPAC…FSRLEICNLS (300 aa)) constitute a Calpain catalytic domain. Residues cysteine 105, histidine 262, and asparagine 286 contribute to the active site. Residues 355–512 (KWNLVLFNGR…VFSEKKAQAL (158 aa)) are domain III. Residues 513–531 (EIGDAVPGDPHEPHPRDMD) are linker. EF-hand domains are found at residues 531-566 (DGED…LLSK), 575-610 (FNIN…ICKY), 605-640 (LKIC…AGFT), and 670-703 (IRLE…RALV). The tract at residues 532 to 703 (GEDEHFWSLS…LAEWLCRALV (172 aa)) is domain IV. Aspartate 588, aspartate 590, threonine 592, serine 594, glutamate 599, aspartate 618, serine 620, threonine 624, and glutamate 629 together coordinate Ca(2+).

It belongs to the peptidase C2 family. As to quaternary structure, monomer and homooligomer. Interacts with COPS1/GPS1, COPB1, EYA2, NME2, NME4 and TOMM70. It depends on Ca(2+) as a cofactor. Undergoes autolytic cleavage between Ala-5 and Ala-6 which gives rise to fragments extending from Ala-6 to the C-terminus, Ala-6 to the EF-hand 2 domain and from Ala-6 to the beginning of domain III. In terms of tissue distribution, predominantly expressed in the stomach. Localizes strictly to the surface mucus cells in the gastric epithelium and the mucus-secreting goblet cells in the duodenum.

It localises to the cytoplasm. Its subcellular location is the golgi apparatus. The catalysed reaction is Broad endopeptidase specificity.. The concentration of calcium for half-maximal activity is 0.3 mM. Inhibited by calpastatin and calpeptin. Its function is as follows. Calcium-regulated non-lysosomal thiol-protease. Involved in membrane trafficking in the gastric surface mucus cells (pit cells) and may involve the membrane trafficking of mucus cells via interactions with coat protein. Proteolytically cleaves the beta-subunit of coatomer complex. This is Calpain-8 (Capn8) from Mus musculus (Mouse).